Reading from the N-terminus, the 235-residue chain is Myelin protein zero-like protein 3 (235 aa).

Positions Met1–Ser31 are cleaved as a signal peptide. The Ig-like V-type domain occupies Leu32–Thr148. Residues Leu32–Ser158 are Extracellular-facing. An intrachain disulfide couples Cys52 to Cys128. A glycan (N-linked (GlcNAc...) asparagine) is linked at Asn123. The helical transmembrane segment at Val159–Val179 threads the bilayer. The Cytoplasmic portion of the chain corresponds to Arg180–Tyr235.

It belongs to the myelin P0 protein family.

It localises to the membrane. Mediates homophilic cell-cell adhesion. This Homo sapiens (Human) protein is Myelin protein zero-like protein 3 (MPZL3).